We begin with the raw amino-acid sequence, 68 residues long: Metallothionein (68 aa).

Belongs to the metallothionein superfamily. Type 4 family.

Its function is as follows. Metallothioneins have a high content of cysteine residues that bind various heavy metals. This chain is Metallothionein (MT1), found in Lytechinus pictus (Painted sea urchin).